The following is a 127-amino-acid chain: MEMTYYEKTPLIRQFLNNGKTNSWFYVKHEMLQPGGSFKSRGIGHLIRKSNEEALSEGSGKLAVFSSSGGNAGLAAATACRSMALNCSVVVPKTTKPRMVKKIQSAGAKVIIHGDHWGEADEYLRHE.

Lys39 is modified (N6-(pyridoxal phosphate)lysine).

The protein belongs to the serine/threonine dehydratase family. It depends on pyridoxal 5'-phosphate as a cofactor.

It localises to the cytoplasm. It carries out the reaction L-serine = pyruvate + NH4(+). It functions in the pathway carbohydrate biosynthesis; gluconeogenesis. The sequence is that of Putative truncated L-serine dehydratase YIL168W from Saccharomyces cerevisiae (strain ATCC 204508 / S288c) (Baker's yeast).